A 158-amino-acid chain; its full sequence is Phospholipase A2 AP-PLA2-II (158 aa).

An N-terminal signal peptide occupies residues 1–16 (MKTFLILAMAVALAKA). Positions 17–23 (QSTDEIT) are excised as a propeptide. 6 cysteine pairs are disulfide-bonded: C51/C158, C53/C69, C68/C138, C75/C131, C85/C124, and C109/C129. Positions 54 and 56 each coordinate Ca(2+). H72 is a catalytic residue. D73 contributes to the Ca(2+) binding site. D132 is an active-site residue.

Belongs to the phospholipase A2 family. Group I subfamily. Monomer. The cofactor is Ca(2+). In terms of tissue distribution, expressed by the venom gland.

The protein localises to the secreted. The catalysed reaction is a 1,2-diacyl-sn-glycero-3-phosphocholine + H2O = a 1-acyl-sn-glycero-3-phosphocholine + a fatty acid + H(+). Functionally, starfish phospholipase A2 (PLA2) that has hemorrhagic and capillary permeability-increasing activities and hence is considered to be deeply involved in the local inflammation. Shows hemolytic activity only in the presence of phosphatidylcholine (PC). PLA2 catalyzes the calcium-dependent hydrolysis of the 2-acyl groups in 3-sn-phosphoglycerides. This chain is Phospholipase A2 AP-PLA2-II, found in Acanthaster planci (Crown-of-thorns starfish).